Consider the following 660-residue polypeptide: Polyadenylation factor subunit 2 (660 aa).

Positions 1-12 (MSYEPRGDHDKG) are enriched in basic and acidic residues. The interval 1–32 (MSYEPRGDHDKGYGGGGGHDGLPPRNRGRRPV) is disordered. WD repeat units lie at residues 94 to 133 (KIKH…FETI), 136 to 176 (AHDS…ESIR), 177 to 216 (GHTD…TDMT), 219 to 258 (GHGW…CLTT), 261 to 301 (GHKN…DIAL), 304 to 344 (GHEK…TAPD), and 376 to 415 (AHDF…EAPE). The tract at residues 562 to 660 (KAGYQPPPPP…QSKGNYTRVR (99 aa)) is disordered. Pro residues predominate over residues 566 to 610 (QPPPPPGSAGAPMPPPGILPPGLIPPPGAAGFPMPPPGFAPPPLI).

Its subcellular location is the nucleus. Its function is as follows. Required for 3'-end cleavage and polyadenylation of pre-mRNAs. Also involved in chromosome segregation where it has a role in chromosome attachment to the mitotic spindle. This is Polyadenylation factor subunit 2 (paa-1) from Neurospora crassa (strain ATCC 24698 / 74-OR23-1A / CBS 708.71 / DSM 1257 / FGSC 987).